The following is a 367-amino-acid chain: Probable ATP-dependent RNA helicase MJ0669 (367 aa).

The Q motif motif lies at Met-6–Met-34. Positions Pro-38–Ile-206 constitute a Helicase ATP-binding domain. Ala-51–Thr-58 is an ATP binding site. Residues Asp-154–Asp-157 carry the DEAD box motif. The Helicase C-terminal domain maps to Asn-213–Gly-367.

Belongs to the DEAD box helicase family. Homodimer.

It catalyses the reaction ATP + H2O = ADP + phosphate + H(+). The polypeptide is Probable ATP-dependent RNA helicase MJ0669 (Methanocaldococcus jannaschii (strain ATCC 43067 / DSM 2661 / JAL-1 / JCM 10045 / NBRC 100440) (Methanococcus jannaschii)).